The following is a 408-amino-acid chain: Protein SPATA31F3 (408 aa).

Residues 11–31 traverse the membrane as a helical segment; sequence VGYPFYTYGSIIIIALIIWQV. Positions 51–71 are disordered; the sequence is QKVKQRAKEKTPRARRHSRKE. S152 bears the Phosphoserine mark. Disordered stretches follow at residues 297-316 and 351-408; these read TKTK…MKGA and LPLS…SASS. Residues 351–392 are compositionally biased toward polar residues; sequence LPLSSGSSKRSPLLTCATQPENPSHVSVSTSAEGTCLPQEST.

Belongs to the SPATA31 family.

The protein localises to the membrane. In Bos taurus (Bovine), this protein is Protein SPATA31F3 (SPATA31F3).